The sequence spans 556 residues: HIRA-interacting protein 3 (556 aa).

A Phosphoserine modification is found at Ser27. Over residues 64–77 (DEAASREDKLDLTK) the composition is skewed to basic and acidic residues. The interval 64-426 (DEAASREDKL…GRRGEDHPAV (363 aa)) is disordered. Residue Thr84 is modified to Phosphothreonine. Phosphoserine is present on residues Ser87, Ser98, Ser100, Ser125, Ser142, Ser143, Ser159, and Ser160. Over residues 99 to 108 (ESESGSEASS) the composition is skewed to low complexity. Over residues 126 to 158 (PAKEENPRRASKAVEESSDEERQRDLPAQRGEE) the composition is skewed to basic and acidic residues. Over residues 168–177 (KGKTRKKPVV) the composition is skewed to basic residues. Phosphoserine occurs at positions 196, 199, 223, and 227. The span at 209 to 224 (KKVEGNKGTKSLKESE) shows a compositional bias: basic and acidic residues. Residues 240-254 (EEEVEEEEKEEDEEK) are compositionally biased toward acidic residues. The span at 260–269 (RTRSNGRRKS) shows a compositional bias: basic residues. Phosphoserine is present on residues Ser289 and Ser291. The span at 304–322 (DSGRDREPPVQRKSEDRTQ) shows a compositional bias: basic and acidic residues. Residues Ser330, Ser332, Ser333, and Ser357 each carry the phosphoserine modification. Residue Thr358 is modified to Phosphothreonine. Phosphoserine occurs at positions 359, 363, 370, and 372. A compositionally biased stretch (basic residues) spans 385-396 (RSSKKSSRKGRT). Residues 403 to 527 (SDGSPEAKGG…APPGELYRRT (125 aa)) form an interaction with the histone H2A-H2B complex region. At Thr471 the chain carries Phosphothreonine. The interval 502–556 (SGRPRRRTAWNPLGEAAPPGELYRRTLDSDEERPRPAPPDWSHMRGIISSDGESN) is disordered. A compositionally biased stretch (basic and acidic residues) spans 523–536 (LYRRTLDSDEERPR). Phosphoserine occurs at positions 530, 550, 551, and 555.

In terms of assembly, interacts (via C-terminus) with histone H2A-H2B dimers; the interaction is direct. Interacts with HIRA. Interacts with CK2. Phosphorylated by CK2. As to expression, widely expressed. Isoform 1 is predominant in skeletal muscle. Isoform 2 is predominant in liver and heart.

The protein localises to the nucleus. In terms of biological role, histone chaperone that carries a H2A-H2B histone complex and facilitates its deposition onto chromatin. This Homo sapiens (Human) protein is HIRA-interacting protein 3 (HIRIP3).